The sequence spans 346 residues: Peripherin-2 (346 aa).

Residues 1 to 18 (MALLKVKFDQKKRVKLAQ) are Cytoplasmic-facing. A helical transmembrane segment spans residues 19–41 (GLWLMNWFSVLAGIIIFGLGLFL). Over 42-62 (KIELRKRSDVMNNSESHFVPN) the chain is Lumenal. A glycan (N-linked (GlcNAc...) asparagine) is linked at asparagine 53. The chain crosses the membrane as a helical span at residues 63 to 79 (SLIGVGVLSCVFNSLAG). Over 80-101 (KICYDALDPAKYAKWKPWLKPY) the chain is Cytoplasmic. A helical membrane pass occupies residues 102 to 122 (LAVCVLFNVVLFLVALCCFLL). At 123–264 (RGSLESTLAH…LSYYSNLMNT (142 aa)) the chain is on the lumenal side. N-linked (GlcNAc...) asparagine glycans are attached at residues asparagine 229 and asparagine 263. The chain crosses the membrane as a helical span at residues 265 to 283 (TGAVTLLVWLFEVTITVGL). Residues 284–346 (RYLHTALEGM…EDAGQAPAAG (63 aa)) lie on the Cytoplasmic side of the membrane. The segment at 341 to 346 (QAPAAG) is interaction with MREG.

The protein belongs to the PRPH2/ROM1 family. In terms of assembly, homodimer; disulfide-linked. Forms a homotetramer. Forms a heterotetramer with ROM1. Homotetramer and heterotetramer core complexes go on to form higher order complexes by formation of intermolecular disulfide bonds. Interacts with MREG. Interacts with STX3. Interacts with SNAP25. In terms of tissue distribution, retina (photoreceptor). In rim region of ROS (rod outer segment) disks.

It is found in the membrane. Its subcellular location is the cell projection. The protein resides in the cilium. It localises to the photoreceptor outer segment. The protein localises to the photoreceptor inner segment. In terms of biological role, essential for retina photoreceptor outer segment disk morphogenesis, may also play a role with ROM1 in the maintenance of outer segment disk structure. Required for the maintenance of retinal outer nuclear layer thickness. Required for the correct development and organization of the photoreceptor inner segment. This is Peripherin-2 (PRPH2) from Bos taurus (Bovine).